The chain runs to 278 residues: Tryptophan synthase alpha chain (278 aa).

Active-site proton acceptor residues include E49 and D60.

The protein belongs to the TrpA family. As to quaternary structure, tetramer of two alpha and two beta chains.

The catalysed reaction is (1S,2R)-1-C-(indol-3-yl)glycerol 3-phosphate + L-serine = D-glyceraldehyde 3-phosphate + L-tryptophan + H2O. The protein operates within amino-acid biosynthesis; L-tryptophan biosynthesis; L-tryptophan from chorismate: step 5/5. Functionally, the alpha subunit is responsible for the aldol cleavage of indoleglycerol phosphate to indole and glyceraldehyde 3-phosphate. This chain is Tryptophan synthase alpha chain, found in Rhodopirellula baltica (strain DSM 10527 / NCIMB 13988 / SH1).